Here is a 53-residue protein sequence, read N- to C-terminus: Rubredoxin (53 aa).

The region spanning 1 to 52 (MAKWRCKICGYIYDEDEGDPDNGISPGTKFEDLPDDWVCPLCGAPKSEFERI) is the Rubredoxin-like domain. Fe cation is bound by residues Cys-6, Cys-9, Cys-39, and Cys-42.

It belongs to the rubredoxin family. Fe(3+) serves as cofactor.

Its function is as follows. Rubredoxin is a small nonheme, iron protein lacking acid-labile sulfide. Its single Fe, chelated to 4 Cys, functions as an electron acceptor and may also stabilize the conformation of the molecule. This chain is Rubredoxin (rub), found in Pyrococcus abyssi (strain GE5 / Orsay).